Here is an 856-residue protein sequence, read N- to C-terminus: Inactive rhomboid protein 1 (856 aa).

Residues 1–21 (MGEARRDSSSSLQHKKPPWLK) form a disordered region. Residues 1–412 (MGEARRDSSS…HRPFFTYWLT (412 aa)) lie on the Cytoplasmic side of the membrane. 2 positions are modified to phosphoserine: S76 and S176. 2 positions are modified to phosphothreonine: T180 and T183. A Phosphoserine modification is found at S391. A helical membrane pass occupies residues 413–433 (FVHSLVTILAVCIYGVAPVGF). Residues 434–656 (SQHETVDSVL…NPEVPDQFYR (223 aa)) are Lumenal-facing. The N-linked (GlcNAc...) asparagine glycan is linked to N584. The helical transmembrane segment at 657–677 (LWLSLFLHAGVLHCLVSVCFQ) threads the bilayer. Topologically, residues 678–692 (MTVLRDLEKLAGWHR) are cytoplasmic. The chain crosses the membrane as a helical span at residues 693 to 713 (IAIIYLLSGVTGNLASAIFLP). The Lumenal portion of the chain corresponds to 714 to 715 (YR). The helical transmembrane segment at 716-736 (AEVGPAGSQFGILACLFVELF) threads the bilayer. Over 737–747 (QSWQILARPWR) the chain is Cytoplasmic. The chain crosses the membrane as a helical span at residues 748 to 768 (AFFKLLAVVLFLFTFGLLPWI). Topologically, residues 769-773 (DNFAH) are lumenal. A helical transmembrane segment spans residues 774–794 (ISGFISGLFLSFAFLPYISFG). At 795–804 (KFDLYRKRCQ) the chain is on the cytoplasmic side. A helical transmembrane segment spans residues 805-825 (IIVFQLVFLGLLAGLVVLFYF). Over 826–856 (YPVRCEWCEFLTCIPFTDKFCEKYELDAQLH) the chain is Lumenal.

This sequence belongs to the peptidase S54 family. In terms of assembly, homodimer, or homooligomer. Interacts with TGFA and HBEGF. Interacts with EGF; may retain EGF in the endoplasmic reticulum and regulates its degradation through the endoplasmic reticulum-associated degradation (ERAD). Interacts (via cytoplasmic N-terminus) with FRMD8/iTAP; this interaction leads to mutual protein stabilization. Interacts with ADAM17/TACE.

It localises to the endoplasmic reticulum membrane. The protein localises to the golgi apparatus membrane. Regulates ADAM17 protease, a sheddase of the epidermal growth factor (EGF) receptor ligands and TNF, thereby plays a role in sleep, cell survival, proliferation, migration and inflammation. Does not exhibit any protease activity on its own. The sequence is that of Inactive rhomboid protein 1 (RHBDF1) from Bos taurus (Bovine).